Reading from the N-terminus, the 355-residue chain is MIASADLDACREMIRTGSYSFHAASRLLPERVRAPSLALYAFCRVADDAVDEAVNDGQREEDAEVKRRAVLSLRDRLDLVYGGRPRNAPADRAFAAVVEEFEMPRALPEALLEGLAWDAVGRSYDSFSGVLDYSARVAAAVGAMMCVLMRVRDPDVLARACDLGLAMQLTNIARDVGTDARSGRIYLPRDWMEEEGLPVEEFLARPVVDDRIRAVTHRLLRAADRLYLRSEAGVCGLPLACRPGIYAARHIYAGIGDEIARNGYDSVTRRAFTTRRQKLVWLGLSATRAALSPFGPGCATLHAAPEPEVAFLVNAAARARPQRGRSEALISVLAQLEAQDRQISRQRLGNRANPI.

Belongs to the phytoene/squalene synthase family. ATP is required as a cofactor. Mn(2+) serves as cofactor. Requires Mg(2+) as cofactor.

It participates in carotenoid biosynthesis; phytoene biosynthesis. Its function is as follows. Involved in the biosynthesis of carotenoids. Catalyzes the condensation of two molecules of geranylgeranyl diphosphate (GGPP) to give prephytoene diphosphate (PPPP) and the subsequent rearrangement of the cyclopropylcarbinyl intermediate to yield phytoene. The protein is Phytoene synthase (crtB) of Cereibacter sphaeroides (strain ATCC 17023 / DSM 158 / JCM 6121 / CCUG 31486 / LMG 2827 / NBRC 12203 / NCIMB 8253 / ATH 2.4.1.) (Rhodobacter sphaeroides).